A 236-amino-acid polypeptide reads, in one-letter code: 7-cyano-7-deazaguanine synthase (236 aa).

C7–A17 serves as a coordination point for ATP. Zn(2+)-binding residues include C185, C193, C196, and C199.

This sequence belongs to the QueC family. Zn(2+) is required as a cofactor.

It carries out the reaction 7-carboxy-7-deazaguanine + NH4(+) + ATP = 7-cyano-7-deazaguanine + ADP + phosphate + H2O + H(+). It participates in purine metabolism; 7-cyano-7-deazaguanine biosynthesis. In terms of biological role, catalyzes the ATP-dependent conversion of 7-carboxy-7-deazaguanine (CDG) to 7-cyano-7-deazaguanine (preQ(0)). The chain is 7-cyano-7-deazaguanine synthase from Rhizobium rhizogenes (strain K84 / ATCC BAA-868) (Agrobacterium radiobacter).